Reading from the N-terminus, the 1026-residue chain is Multidrug resistance protein MdtC (1026 aa).

Over 1–6 the chain is Cytoplasmic; that stretch reads MRFFAL. Residues 7 to 29 traverse the membrane as a helical segment; sequence FIYRPVATILIAAAITLCGILGF. The Periplasmic portion of the chain corresponds to 30–335; sequence RLLPVAPLPQ…TIRASLQEVE (306 aa). A helical membrane pass occupies residues 336 to 353; it reads ETLAISVALVILVVFLFL. Topologically, residues 354-359 are cytoplasmic; sequence RSGRAT. A helical transmembrane segment spans residues 360-379; sequence LIPAVAVPVSLIGTFAAMYL. Residues 380 to 388 lie on the Periplasmic side of the membrane; the sequence is CGFSLNNLS. The helical transmembrane segment at 389–411 threads the bilayer; sequence LMALTIATGFVVDDAIVVLENIA. At 412–430 the chain is on the cytoplasmic side; it reads RHLEAGMKPLQAALQGTRE. The helical transmembrane segment at 431–453 threads the bilayer; sequence VGFTVISMSLSLVAVFLPLLLMG. Residues 454-467 are Periplasmic-facing; sequence GLPGRLLREFAVTL. The helical transmembrane segment at 468–490 threads the bilayer; sequence SVAIGISLVVSLTLTPMMCGWML. Over 491–852 the chain is Cytoplasmic; sequence KSSKPRTQPR…QVFQQTMNSQ (362 aa). Residues 853-875 traverse the membrane as a helical segment; that stretch reads LILIVAAIATVYIVLGILYESYV. Residues 876–894 are Periplasmic-facing; sequence HPLTILSTLPSAGVGALLA. The chain crosses the membrane as a helical span at residues 895–917; sequence LELFNAPFSLIALIGIMLLIGIV. The Cytoplasmic segment spans residues 918–947; the sequence is KKNAIMMVDFALEAQRSGGLTPEQAIFQAC. A helical transmembrane segment spans residues 948 to 970; that stretch reads LLRFRPIMMTTLAALFGALPLVL. The Periplasmic portion of the chain corresponds to 971–984; it reads SGGDGSELRQPLGI. Residues 985–1007 traverse the membrane as a helical segment; sequence TIVGGLVMSQLLTLYTTPVVYLF. Residues 1008-1026 lie on the Cytoplasmic side of the membrane; the sequence is FDRLRLRFSRKNSKPVVEI.

Belongs to the resistance-nodulation-cell division (RND) (TC 2.A.6) family. MdtC subfamily. Part of a tripartite efflux system composed of MdtA, MdtB and MdtC. MdtC forms a heteromultimer with MdtB.

It is found in the cell inner membrane. This Salmonella typhimurium (strain LT2 / SGSC1412 / ATCC 700720) protein is Multidrug resistance protein MdtC.